Here is a 272-residue protein sequence, read N- to C-terminus: MARLAAFDMDGTLLMPEHHLGRETIATLARLRERDITLTFATGRHVLEMRHILGTLSLDAYLITGNGTRIHSLEGDVLHRQDLDPQVADTVMHHAWDTRASMHVFNDNGWFTGQEIPALLQAHVYSGFRYQVIDIKSIPAHQVTKICFCGDHDDLIRLRIQLNEALEERAHLCFSAVDCLEVLPLGCNKGSALAVLSNHLGLSLADCMAFGDAMNDREMLGSVGRGLIMGNAMPQLIAALPHLSVIGHCGNQAVSHFLTHWLDNPHLPYSPE.

Catalysis depends on D8, which acts as the Nucleophile. Residues D8, D10, and D212 each contribute to the Mg(2+) site.

The protein belongs to the HAD-like hydrolase superfamily. Cof family. Requires Mg(2+) as cofactor.

The enzyme catalyses 4-amino-2-methyl-5-(diphosphooxymethyl)pyrimidine + H2O = 4-amino-2-methyl-5-(phosphooxymethyl)pyrimidine + phosphate + H(+). In terms of biological role, catalyzes the hydrolysis of 4-amino-2-methyl-5-hydroxymethylpyrimidine pyrophosphate (HMP-PP) to 4-amino-2-methyl-5-hydroxymethylpyrimidine phosphate (HMP-P). The sequence is that of HMP-PP phosphatase from Salmonella agona (strain SL483).